Here is a 215-residue protein sequence, read N- to C-terminus: Putative BTB/POZ domain-containing protein At2g05330 (215 aa).

Positions 17 to 87 constitute a BTB domain; sequence SWQKIGKLTY…LYSDGSMLSS (71 aa).

It functions in the pathway protein modification; protein ubiquitination. Functionally, may act as a substrate-specific adapter of an E3 ubiquitin-protein ligase complex (CUL3-RBX1-BTB) which mediates the ubiquitination and subsequent proteasomal degradation of target proteins. The sequence is that of Putative BTB/POZ domain-containing protein At2g05330 from Arabidopsis thaliana (Mouse-ear cress).